Consider the following 176-residue polypeptide: Ubiquitin-conjugating enzyme E2-20 kDa (176 aa).

Residues 1–20 (MDSDMQNQNPHTNSKNSSSA) are compositionally biased toward polar residues. Positions 1–25 (MDSDMQNQNPHTNSKNSSSAGMAVD) are disordered. Residues 28-175 (SVTKRLRSEL…LMQRYKEIDE (148 aa)) form the UBC core domain. Catalysis depends on cysteine 113, which acts as the Glycyl thioester intermediate.

It belongs to the ubiquitin-conjugating enzyme family.

The enzyme catalyses S-ubiquitinyl-[E1 ubiquitin-activating enzyme]-L-cysteine + [E2 ubiquitin-conjugating enzyme]-L-cysteine = [E1 ubiquitin-activating enzyme]-L-cysteine + S-ubiquitinyl-[E2 ubiquitin-conjugating enzyme]-L-cysteine.. Its pathway is protein modification; protein ubiquitination. Its function is as follows. Catalyzes the covalent attachment of ubiquitin to other proteins. This is Ubiquitin-conjugating enzyme E2-20 kDa (ubc11) from Schizosaccharomyces pombe (strain 972 / ATCC 24843) (Fission yeast).